The chain runs to 261 residues: Protein FAM78B (261 aa).

Belongs to the FAM78 family.

The protein is Protein FAM78B (FAM78B) of Homo sapiens (Human).